The chain runs to 734 residues: Photosystem I P700 chlorophyll a apoprotein A2 (734 aa).

8 helical membrane passes run 46–69 (IFAS…FHVA), 135–158 (LYQG…LHLQ), 175–199 (LNHH…HVAI), 273–291 (IAHH…GHQY), 330–353 (LHFQ…QHMY), 369–395 (AALY…IFFI), 417–439 (AIIS…LYVH), and 517–535 (FLVH…LILV). Positions 559 and 568 each coordinate [4Fe-4S] cluster. 2 helical membrane-spanning segments follow: residues 575 to 596 (AFYL…YWHW) and 643 to 665 (LSVW…MFLI). Chlorophyll a contacts are provided by histidine 654, methionine 662, and tyrosine 670. Tryptophan 671 contacts phylloquinone. The helical transmembrane segment at 707–727 (LVGLAHFSVGYIFTYAAFLIA) threads the bilayer.

Belongs to the PsaA/PsaB family. The PsaA/B heterodimer binds the P700 chlorophyll special pair and subsequent electron acceptors. PSI consists of a core antenna complex that captures photons, and an electron transfer chain that converts photonic excitation into a charge separation. The eukaryotic PSI reaction center is composed of at least 11 subunits. The cofactor is P700 is a chlorophyll a/chlorophyll a' dimer, A0 is one or more chlorophyll a, A1 is one or both phylloquinones and FX is a shared 4Fe-4S iron-sulfur center..

It is found in the plastid. The protein localises to the chloroplast thylakoid membrane. It carries out the reaction reduced [plastocyanin] + hnu + oxidized [2Fe-2S]-[ferredoxin] = oxidized [plastocyanin] + reduced [2Fe-2S]-[ferredoxin]. In terms of biological role, psaA and PsaB bind P700, the primary electron donor of photosystem I (PSI), as well as the electron acceptors A0, A1 and FX. PSI is a plastocyanin-ferredoxin oxidoreductase, converting photonic excitation into a charge separation, which transfers an electron from the donor P700 chlorophyll pair to the spectroscopically characterized acceptors A0, A1, FX, FA and FB in turn. Oxidized P700 is reduced on the lumenal side of the thylakoid membrane by plastocyanin. The protein is Photosystem I P700 chlorophyll a apoprotein A2 of Chaetosphaeridium globosum (Charophycean green alga).